A 103-amino-acid chain; its full sequence is Protein translation factor SUI1 homolog (103 aa).

It belongs to the SUI1 family.

This Hyperthermus butylicus (strain DSM 5456 / JCM 9403 / PLM1-5) protein is Protein translation factor SUI1 homolog.